A 517-amino-acid chain; its full sequence is DNA-(apurinic or apyrimidinic site) endonuclease 2 (517 aa).

Asn-9 and Glu-34 together coordinate Mg(2+). A Claspin-like CKB motif motif is present at residues 82–90 (EEGLSGVFC). The active site involves Tyr-142. Mg(2+)-binding residues include Asp-183, Asn-185, Asp-299, and His-300. Asp-183 (proton donor/acceptor) is an active-site residue. Residue His-300 is the Proton acceptor of the active site. Residues 347-362 (GNTTEESSELTGTPSF) show a composition bias toward polar residues. A disordered region spans residues 347-366 (GNTTEESSELTGTPSFTEGA). Residues 395–402 (QGNLLSFF) carry the PCNA interacting protein (PIP) box motif. 4 residues coordinate Zn(2+): Cys-463, His-466, Cys-489, and Cys-503. A GRF-type zinc finger spans residues 463–512 (CKGHSEPCVLRTVKKAGPNCGRQFYVCARPEGHSSNPQARCNFFLWLTKK).

Belongs to the DNA repair enzymes AP/ExoA family. As to quaternary structure, interacts (via PIP box and GRF-type Zinc finger domain) with pcna; the interaction is required for 3 -5 SSB end resection, assembly of a checkpoint protein complex to SSB sites, and SSB signaling. Interacts with chek1. Requires Mg(2+) as cofactor. Mn(2+) serves as cofactor. As to expression, expressed in eggs (at protein level).

Its subcellular location is the nucleus. It localises to the chromosome. It is found in the cytoplasm. The protein localises to the mitochondrion. The enzyme catalyses Exonucleolytic cleavage in the 3'- to 5'-direction to yield nucleoside 5'-phosphates.. With respect to regulation, 3'-5' nuclease activity is stimulated in presence of pcna. Functionally, functions as a weak apurinic/apyrimidinic (AP) endodeoxyribonuclease in the DNA base excision repair (BER) pathway of DNA lesions induced by oxidative and alkylating agents. Initiates repair of AP sites in DNA by catalyzing hydrolytic incision of the phosphodiester backbone immediately adjacent to the damage, generating a single-strand break with 5'-deoxyribose phosphate and 3'-hydroxyl ends. Exhibits 3'-5' exonuclease activity on a 3' DNA substrate; nuclease activity is stimulated by interaction with pcna. Has a preference for the 3' recessed ends over blunt-ended substrates, in both the presence and the absence of pcna. Generates single-stranded DNA (ssDNA) via 3'-5' single-strand break (SSB) end resection, thereby promoting a DNA damage response via replication protein A (rpa2)-binding to ssDNA and the recruitment of a checkpoint protein complex, including atr, atr-interacting protein atrip, and rad9, to damage sites following oxidative stress. Plays a role in reversing blocked 3' DNA ends, problematic lesions that preclude DNA synthesis. Required for chek1 phosphorylation induced by hydrogen peroxide but not by stalled replication forks. In Xenopus laevis (African clawed frog), this protein is DNA-(apurinic or apyrimidinic site) endonuclease 2.